Reading from the N-terminus, the 500-residue chain is Probable cytosol aminopeptidase (500 aa).

2 residues coordinate Mn(2+): Lys-264 and Asp-269. Lys-276 is an active-site residue. Mn(2+)-binding residues include Asp-287, Asp-346, and Glu-348. Residue Arg-350 is part of the active site.

This sequence belongs to the peptidase M17 family. Requires Mn(2+) as cofactor.

It localises to the cytoplasm. It carries out the reaction Release of an N-terminal amino acid, Xaa-|-Yaa-, in which Xaa is preferably Leu, but may be other amino acids including Pro although not Arg or Lys, and Yaa may be Pro. Amino acid amides and methyl esters are also readily hydrolyzed, but rates on arylamides are exceedingly low.. The enzyme catalyses Release of an N-terminal amino acid, preferentially leucine, but not glutamic or aspartic acids.. Functionally, presumably involved in the processing and regular turnover of intracellular proteins. Catalyzes the removal of unsubstituted N-terminal amino acids from various peptides. The polypeptide is Probable cytosol aminopeptidase (Nitrobacter winogradskyi (strain ATCC 25391 / DSM 10237 / CIP 104748 / NCIMB 11846 / Nb-255)).